Reading from the N-terminus, the 445-residue chain is Probable D-serine dehydratase (445 aa).

At Lys111 the chain carries N6-(pyridoxal phosphate)lysine.

Belongs to the serine/threonine dehydratase family. DsdA subfamily. Pyridoxal 5'-phosphate serves as cofactor.

The catalysed reaction is D-serine = pyruvate + NH4(+). This chain is Probable D-serine dehydratase, found in Burkholderia pseudomallei (strain 1710b).